A 435-amino-acid chain; its full sequence is Nuclear receptor subfamily 6 group A member 1 (435 aa).

The segment at residues 11-86 is a DNA-binding region (nuclear receptor); that stretch reads QRACLICGDR…MGMNRKAIRE (76 aa). NR C4-type zinc fingers lie at residues 14–34 and 50–69; these read CLIC…CEGC and CSRD…CQYC. The disordered stretch occupies residues 84 to 158; the sequence is IREDGMPGGR…STPSSSRSME (75 aa). A compositionally biased stretch (polar residues) spans 121–141; it reads NTSWSNNGDSDHSSPGNAVSE. Over residues 142–156 the composition is skewed to low complexity; it reads SNQPSPVSTPSSSRS. An NR LBD domain is found at 204 to 435; the sequence is QSHTLINQLL…HSCKTIVTKE (232 aa).

It belongs to the nuclear hormone receptor family. NR6 subfamily. As to quaternary structure, homodimer. In terms of tissue distribution, transiently expressed in differentiating cells of all embryonic germ layers. Expressed in an anterior to posterior concentration gradient from late gastrula to midneurula stages. Shows a complicated spatio-temporal pattern of expression during neurulation, being predominant in the neural plate and neural crest in midneurula embryos. At late tailbud (stage 30), mainly expressed in the head mesenchyme, gill arches and tail tip. Expression persists in the epidermis, somites and endoderm, and in the central nervous system, expression is restricted to the midbrain, hindbrain and part of the spinal cord. Isoforms Oo and Em are both expressed in the brain and isoform Oo is expressed in the germ cells of both the adult testis and ovary.

The protein resides in the cytoplasm. It is found in the nucleus. Its function is as follows. Probable orphan nuclear receptor. Binds to a response element containing repeats of the motif 5'-AGGTCA-3'. Required for anterior-posterior patterning during organogenesis. Acts with chordin to play a role in patterning the midbrain-hindbrain. Isoform Em is required for integrin-mediated cell matrix interaction during neurulation and for the morphogenetic movements leading to formation of the neural tube. Also mediates the effect of retinoic acid on primary neurogenesis. This is Nuclear receptor subfamily 6 group A member 1 from Xenopus laevis (African clawed frog).